The chain runs to 994 residues: Integrator complex subunit 5 (994 aa).

Residues 559–586 (NSNNNNELCNGKDYGKRTKLEPGEDKVD) are disordered. Basic and acidic residues predominate over residues 571–583 (DYGKRTKLEPGED). A run of 2 helical transmembrane segments spans residues 769–786 (YSLV…DVMY) and 810–826 (AFIN…LIAG).

It belongs to the Integrator subunit 5 family. As to quaternary structure, belongs to the multiprotein complex Integrator, at least composed of IntS1, IntS2, IntS3, IntS4, omd/IntS5, IntS6, defl/IntS7, IntS8, IntS9, IntS10, IntS11, IntS12, asun/IntS13, IntS14 and IntS15. The core complex associates with protein phosphatase 2A subunits mts/PP2A and Pp2A-29B, to form the Integrator-PP2A (INTAC) complex.

The protein localises to the nucleus membrane. It is found in the nucleus. It localises to the cytoplasm. Its function is as follows. Component of the integrator complex, a multiprotein complex that terminates RNA polymerase II (Pol II) transcription in the promoter-proximal region of genes. The integrator complex provides a quality checkpoint during transcription elongation by driving premature transcription termination of transcripts that are unfavorably configured for transcriptional elongation: the complex terminates transcription by (1) catalyzing dephosphorylation of the C-terminal domain (CTD) of Pol II subunit Polr2A/Rbp1 and Spt5, and (2) degrading the exiting nascent RNA transcript via endonuclease activity. The integrator complex is also involved in the 3'-end processing of the U7 snRNA, and also the spliceosomal snRNAs U1, U2, U4 and U5. In Drosophila melanogaster (Fruit fly), this protein is Integrator complex subunit 5.